A 204-amino-acid chain; its full sequence is NADH-ubiquinone oxidoreductase chain 6 (204 aa).

5 consecutive transmembrane segments (helical) span residues 5 to 25 (IFLF…VIGL), 29 to 49 (VHSV…LLLL), 56 to 76 (FMLI…VVMM), 91 to 111 (LWPI…SSFY), and 151 to 171 (LLFL…IVLT).

The protein belongs to the complex I subunit 6 family.

It is found in the mitochondrion membrane. It catalyses the reaction a ubiquinone + NADH + 5 H(+)(in) = a ubiquinol + NAD(+) + 4 H(+)(out). Its function is as follows. Core subunit of the mitochondrial membrane respiratory chain NADH dehydrogenase (Complex I) that is believed to belong to the minimal assembly required for catalysis. Complex I functions in the transfer of electrons from NADH to the respiratory chain. The immediate electron acceptor for the enzyme is believed to be ubiquinone. The chain is NADH-ubiquinone oxidoreductase chain 6 (ND6) from Chondrus crispus (Carrageen Irish moss).